The chain runs to 153 residues: Large ribosomal subunit protein bL9 (153 aa).

Belongs to the bacterial ribosomal protein bL9 family.

Functionally, binds to the 23S rRNA. The chain is Large ribosomal subunit protein bL9 from Micrococcus luteus (strain ATCC 4698 / DSM 20030 / JCM 1464 / CCM 169 / CCUG 5858 / IAM 1056 / NBRC 3333 / NCIMB 9278 / NCTC 2665 / VKM Ac-2230) (Micrococcus lysodeikticus).